The following is a 456-amino-acid chain: tRNA-2-methylthio-N(6)-dimethylallyladenosine synthase (456 aa).

The MTTase N-terminal domain maps to 6–125 (KRLFIKTYGC…LPELIAQAHR (120 aa)). Positions 15, 51, 88, 163, 167, and 170 each coordinate [4Fe-4S] cluster. One can recognise a Radical SAM core domain in the interval 149-385 (QVEGYSAFVT…QELLSDQQAA (237 aa)). Residues 388–450 (ESMIGRTLPV…RNSLSGSLTG (63 aa)) form the TRAM domain.

Belongs to the methylthiotransferase family. MiaB subfamily. Monomer. [4Fe-4S] cluster is required as a cofactor.

The protein resides in the cytoplasm. The catalysed reaction is N(6)-dimethylallyladenosine(37) in tRNA + (sulfur carrier)-SH + AH2 + 2 S-adenosyl-L-methionine = 2-methylsulfanyl-N(6)-dimethylallyladenosine(37) in tRNA + (sulfur carrier)-H + 5'-deoxyadenosine + L-methionine + A + S-adenosyl-L-homocysteine + 2 H(+). Functionally, catalyzes the methylthiolation of N6-(dimethylallyl)adenosine (i(6)A), leading to the formation of 2-methylthio-N6-(dimethylallyl)adenosine (ms(2)i(6)A) at position 37 in tRNAs that read codons beginning with uridine. The polypeptide is tRNA-2-methylthio-N(6)-dimethylallyladenosine synthase (Maricaulis maris (strain MCS10) (Caulobacter maris)).